The chain runs to 517 residues: Bifunctional purine biosynthesis protein PurH (517 aa).

In terms of domain architecture, MGS-like spans M1–C151.

This sequence belongs to the PurH family.

It catalyses the reaction (6R)-10-formyltetrahydrofolate + 5-amino-1-(5-phospho-beta-D-ribosyl)imidazole-4-carboxamide = 5-formamido-1-(5-phospho-D-ribosyl)imidazole-4-carboxamide + (6S)-5,6,7,8-tetrahydrofolate. It carries out the reaction IMP + H2O = 5-formamido-1-(5-phospho-D-ribosyl)imidazole-4-carboxamide. It participates in purine metabolism; IMP biosynthesis via de novo pathway; 5-formamido-1-(5-phospho-D-ribosyl)imidazole-4-carboxamide from 5-amino-1-(5-phospho-D-ribosyl)imidazole-4-carboxamide (10-formyl THF route): step 1/1. It functions in the pathway purine metabolism; IMP biosynthesis via de novo pathway; IMP from 5-formamido-1-(5-phospho-D-ribosyl)imidazole-4-carboxamide: step 1/1. The sequence is that of Bifunctional purine biosynthesis protein PurH from Elusimicrobium minutum (strain Pei191).